We begin with the raw amino-acid sequence, 519 residues long: NADH-quinone oxidoreductase subunit N (519 aa).

The next 13 membrane-spanning stretches (helical) occupy residues 14 to 34 (LLPAIIMVVGASILLLSEVFL), 44 to 64 (AVLTVVTAVAAGAMALTTMFE), 82 to 102 (FLTFVVCVGLGLATLSSVSFL), 117 to 137 (LFASAGMSLLAMSNELITLFV), 167 to 187 (FILGAFSSAVLLYGAALLYGA), 209 to 229 (GLVYAGIILVITGFAFKVAAV), 249 to 269 (LMSVGVKAAAFAAMVRVFFMV), 278 to 298 (LLGLFSVLAFLTMVAGNLLAI), 307 to 327 (LAYSSIAHAGYLLVGVAALFV), 359 to 379 (ILYYLLAYTFSAVGAFAIVSV), 407 to 427 (WAFAMAAFMLSLGGIPPTIGF), 431 to 451 (LLIFQAAVDAGLIGLTIVGVL), and 487 to 507 (LALVLSTAAVVILGIIPGPIM).

It belongs to the complex I subunit 2 family. In terms of assembly, NDH-1 is composed of 14 different subunits. Subunits NuoA, H, J, K, L, M, N constitute the membrane sector of the complex.

It is found in the cell inner membrane. It carries out the reaction a quinone + NADH + 5 H(+)(in) = a quinol + NAD(+) + 4 H(+)(out). NDH-1 shuttles electrons from NADH, via FMN and iron-sulfur (Fe-S) centers, to quinones in the respiratory chain. The immediate electron acceptor for the enzyme in this species is believed to be ubiquinone. Couples the redox reaction to proton translocation (for every two electrons transferred, four hydrogen ions are translocated across the cytoplasmic membrane), and thus conserves the redox energy in a proton gradient. The chain is NADH-quinone oxidoreductase subunit N from Myxococcus xanthus (strain DK1622).